A 100-amino-acid chain; its full sequence is Large ribosomal subunit protein uL23 (100 aa).

This sequence belongs to the universal ribosomal protein uL23 family. Part of the 50S ribosomal subunit. Contacts protein L29, and trigger factor when it is bound to the ribosome.

Functionally, one of the early assembly proteins it binds 23S rRNA. One of the proteins that surrounds the polypeptide exit tunnel on the outside of the ribosome. Forms the main docking site for trigger factor binding to the ribosome. The chain is Large ribosomal subunit protein uL23 from Buchnera aphidicola subsp. Acyrthosiphon pisum (strain 5A).